The following is a 256-amino-acid chain: Ribonuclease 3 (256 aa).

Residues 3–125 (LDALQQRLGY…IFGAVFLDGG (123 aa)) form the RNase III domain. Residue Glu38 participates in Mg(2+) binding. Residue Asp42 is part of the active site. 2 residues coordinate Mg(2+): Asp111 and Glu114. Glu114 is an active-site residue. In terms of domain architecture, DRBM spans 152–222 (DAKTLLQEYL…AKLALDEAHR (71 aa)). A disordered region spans residues 226–256 (QLVKRSRAERTGKTRKQATPPDPQLSLRLKE).

It belongs to the ribonuclease III family. In terms of assembly, homodimer. Mg(2+) is required as a cofactor.

It localises to the cytoplasm. The catalysed reaction is Endonucleolytic cleavage to 5'-phosphomonoester.. Its function is as follows. Digests double-stranded RNA. Involved in the processing of primary rRNA transcript to yield the immediate precursors to the large and small rRNAs (23S and 16S). Processes some mRNAs, and tRNAs when they are encoded in the rRNA operon. Processes pre-crRNA and tracrRNA of type II CRISPR loci if present in the organism. This Ralstonia pickettii (strain 12J) protein is Ribonuclease 3.